The chain runs to 431 residues: UDP-N-acetylglucosamine 1-carboxyvinyltransferase (431 aa).

Residue 25-26 participates in phosphoenolpyruvate binding; it reads KN. Residue R101 participates in UDP-N-acetyl-alpha-D-glucosamine binding. Catalysis depends on C125, which acts as the Proton donor. At C125 the chain carries 2-(S-cysteinyl)pyruvic acid O-phosphothioketal. UDP-N-acetyl-alpha-D-glucosamine is bound by residues D317 and I339.

This sequence belongs to the EPSP synthase family. MurA subfamily.

Its subcellular location is the cytoplasm. The enzyme catalyses phosphoenolpyruvate + UDP-N-acetyl-alpha-D-glucosamine = UDP-N-acetyl-3-O-(1-carboxyvinyl)-alpha-D-glucosamine + phosphate. It functions in the pathway cell wall biogenesis; peptidoglycan biosynthesis. Cell wall formation. Adds enolpyruvyl to UDP-N-acetylglucosamine. The chain is UDP-N-acetylglucosamine 1-carboxyvinyltransferase from Thermobifida fusca (strain YX).